The primary structure comprises 410 residues: Imidazolonepropionase (410 aa).

Fe(3+) contacts are provided by His-73 and His-75. The Zn(2+) site is built by His-73 and His-75. Arg-82, Tyr-145, and His-178 together coordinate 4-imidazolone-5-propanoate. An N-formimidoyl-L-glutamate-binding site is contributed by Tyr-145. His-243 contributes to the Fe(3+) binding site. Residue His-243 participates in Zn(2+) binding. 4-imidazolone-5-propanoate is bound at residue Gln-246. Asp-318 is a binding site for Fe(3+). Residue Asp-318 participates in Zn(2+) binding. Residues Asn-320 and Gly-322 each contribute to the N-formimidoyl-L-glutamate site. 4-imidazolone-5-propanoate is bound at residue Ser-323.

Belongs to the metallo-dependent hydrolases superfamily. HutI family. Zn(2+) is required as a cofactor. Fe(3+) serves as cofactor.

It is found in the cytoplasm. It catalyses the reaction 4-imidazolone-5-propanoate + H2O = N-formimidoyl-L-glutamate. The protein operates within amino-acid degradation; L-histidine degradation into L-glutamate; N-formimidoyl-L-glutamate from L-histidine: step 3/3. Catalyzes the hydrolytic cleavage of the carbon-nitrogen bond in imidazolone-5-propanoate to yield N-formimidoyl-L-glutamate. It is the third step in the universal histidine degradation pathway. The chain is Imidazolonepropionase from Shewanella frigidimarina (strain NCIMB 400).